The primary structure comprises 1770 residues: Transposon Ty2-DR2 Gag-Pol polyprotein (1770 aa).

Polar residues-rich tracts occupy residues 1-39 (MESQ…SASN) and 49-60 (KVNSQEETTPGT). Disordered stretches follow at residues 1–89 (MESQ…QQHG) and 360–449 (HSEY…SNDE). Residues 295–397 (ENNINVSDRL…SSKPRAAKAH (103 aa)) form an RNA-binding region. Over residues 369 to 381 (TSPNTTNTKVTTR) the composition is skewed to low complexity. Polar residues-rich tracts occupy residues 399–408 (IATSSKFSRV) and 415–435 (ESTV…GQQQ). The For protease activity; shared with dimeric partner role is filled by aspartate 457. The tract at residues 579-636 (NVNKSKSVNKYPYPLIHRMLGHANFRSIQKSLKKNAVTYLKESDIEWSNASTYQCPDC) is integrase-type zinc finger-like. In terms of domain architecture, Integrase catalytic spans 656–831 (ESYEPFQYLH…AGLDITTILP (176 aa)). The Mg(2+) site is built by aspartate 667 and aspartate 732. 3 disordered regions span residues 1005-1038 (GGTI…MIDL), 1059-1135 (TEEP…KSSK), and 1171-1222 (SRQT…LEPP). Composition is skewed to polar residues over residues 1009-1024 (ESDT…FTAR) and 1065-1082 (QRNS…STPS). Positions 1193–1227 (KKRSLEDNETEIEVSRDTWNNKNMRSLEPPRSKKR) match the Bipartite nuclear localization signal motif. Residues 1353–1491 (NDYYITQLDI…DILGLEIKYQ (139 aa)) enclose the Reverse transcriptase Ty1/copia-type domain. Mg(2+) contacts are provided by aspartate 1361, aspartate 1442, aspartate 1443, aspartate 1625, glutamate 1667, and aspartate 1700. The region spanning 1625-1767 (DASYGNQPYY…IKTFKLLTNK (143 aa)) is the RNase H Ty1/copia-type domain.

As to quaternary structure, the capsid protein forms a homotrimer, from which the VLPs are assembled. The protease is a homodimer, whose active site consists of two apposed aspartic acid residues. Initially, virus-like particles (VLPs) are composed of the structural unprocessed proteins Gag and Gag-Pol, and also contain the host initiator methionine tRNA (tRNA(i)-Met) which serves as a primer for minus-strand DNA synthesis, and a dimer of genomic Ty RNA. Processing of the polyproteins occurs within the particle and proceeds by an ordered pathway, called maturation. First, the protease (PR) is released by autocatalytic cleavage of the Gag-Pol polyprotein, and this cleavage is a prerequisite for subsequent processing at the remaining sites to release the mature structural and catalytic proteins. Maturation takes place prior to the RT reaction and is required to produce transposition-competent VLPs.

It is found in the cytoplasm. It localises to the nucleus. It carries out the reaction DNA(n) + a 2'-deoxyribonucleoside 5'-triphosphate = DNA(n+1) + diphosphate. The catalysed reaction is Endonucleolytic cleavage to 5'-phosphomonoester.. Capsid protein (CA) is the structural component of the virus-like particle (VLP), forming the shell that encapsulates the retrotransposons dimeric RNA genome. The particles are assembled from trimer-clustered units and there are holes in the capsid shells that allow for the diffusion of macromolecules. CA also has nucleocapsid-like chaperone activity, promoting primer tRNA(i)-Met annealing to the multipartite primer-binding site (PBS), dimerization of Ty2 RNA and initiation of reverse transcription. Functionally, the aspartyl protease (PR) mediates the proteolytic cleavages of the Gag and Gag-Pol polyproteins after assembly of the VLP. Its function is as follows. Reverse transcriptase/ribonuclease H (RT) is a multifunctional enzyme that catalyzes the conversion of the retro-elements RNA genome into dsDNA within the VLP. The enzyme displays a DNA polymerase activity that can copy either DNA or RNA templates, and a ribonuclease H (RNase H) activity that cleaves the RNA strand of RNA-DNA heteroduplexes during plus-strand synthesis and hydrolyzes RNA primers. The conversion leads to a linear dsDNA copy of the retrotransposon that includes long terminal repeats (LTRs) at both ends. In terms of biological role, integrase (IN) targets the VLP to the nucleus, where a subparticle preintegration complex (PIC) containing at least integrase and the newly synthesized dsDNA copy of the retrotransposon must transit the nuclear membrane. Once in the nucleus, integrase performs the integration of the dsDNA into the host genome. This is Transposon Ty2-DR2 Gag-Pol polyprotein (TY2B-DR2) from Saccharomyces cerevisiae (strain ATCC 204508 / S288c) (Baker's yeast).